Reading from the N-terminus, the 288-residue chain is Orotidine 5'-phosphate decarboxylase (288 aa).

The Proton donor role is filled by Lys-99.

The protein belongs to the OMP decarboxylase family. Type 2 subfamily.

The catalysed reaction is orotidine 5'-phosphate + H(+) = UMP + CO2. The protein operates within pyrimidine metabolism; UMP biosynthesis via de novo pathway; UMP from orotate: step 2/2. This is Orotidine 5'-phosphate decarboxylase (pyrF) from Myxococcus xanthus (strain DK1622).